Consider the following 355-residue polypeptide: Phospho-N-acetylmuramoyl-pentapeptide-transferase (355 aa).

The next 10 helical transmembrane spans lie at 14–34 (PTGT…VVFF), 40–60 (LLIP…QVVP), 84–104 (GTPT…ALIW), 107–127 (FTPN…IGWL), 147–167 (LILQ…NQVS), 176–196 (LVIP…VAES), 205–225 (VDGL…IIIA), 227–247 (SHPD…GFIF), 268–290 (ALAA…GLFF), and 334–354 (TKIV…AIWS).

Belongs to the glycosyltransferase 4 family. MraY subfamily. Mg(2+) is required as a cofactor.

It localises to the cell inner membrane. It carries out the reaction UDP-N-acetyl-alpha-D-muramoyl-L-alanyl-gamma-D-glutamyl-meso-2,6-diaminopimeloyl-D-alanyl-D-alanine + di-trans,octa-cis-undecaprenyl phosphate = di-trans,octa-cis-undecaprenyl diphospho-N-acetyl-alpha-D-muramoyl-L-alanyl-D-glutamyl-meso-2,6-diaminopimeloyl-D-alanyl-D-alanine + UMP. It functions in the pathway cell wall biogenesis; peptidoglycan biosynthesis. Functionally, catalyzes the initial step of the lipid cycle reactions in the biosynthesis of the cell wall peptidoglycan: transfers peptidoglycan precursor phospho-MurNAc-pentapeptide from UDP-MurNAc-pentapeptide onto the lipid carrier undecaprenyl phosphate, yielding undecaprenyl-pyrophosphoryl-MurNAc-pentapeptide, known as lipid I. The protein is Phospho-N-acetylmuramoyl-pentapeptide-transferase of Microcystis aeruginosa (strain NIES-843 / IAM M-2473).